The chain runs to 397 residues: MGKAKFERNKPHCNIGTIGHVDHGKTTLTAAITKTLHDRLGTGEAVAFDKIDKAPEERERGITISTSHVEYESKARHYAHVDCPGHADYVKNMITGAAQMDGAILVVAATDGVMAQTKEHILLSRQVGVPYIVVFMNKCDMVDDPELLELVEMEIRELLSEYEFPGDDTPIIQGSALRALEDPNSQWGDKILELFDAVDTWIPDPQRATDKPFLMPIEDVFSITGRGTVATGRVERGVLHVSEEVEIVGVKEETRKVVVTGIEMFRKLLDEAQAGDNIGALLRGVQRTDIERGQVLCKPGTIKCYKKFTAQVYVLTKDEGGRHTPFFNNYRPQFYFRTTDVTGVCNLPEGVEMCMPGDNIEMNIELIHPIAMEQGLGFAIREGGRTVGSGKVATIIG.

The region spanning 10-206 is the tr-type G domain; the sequence is KPHCNIGTIG…AVDTWIPDPQ (197 aa). The G1 stretch occupies residues 19-26; sequence GHVDHGKT. 19–26 provides a ligand contact to GTP; that stretch reads GHVDHGKT. Thr-26 contributes to the Mg(2+) binding site. A G2 region spans residues 61–65; sequence GITIS. A G3 region spans residues 82 to 85; that stretch reads DCPG. GTP contacts are provided by residues 82–86 and 137–140; these read DCPGH and NKCD. The G4 stretch occupies residues 137–140; that stretch reads NKCD. The interval 175-177 is G5; the sequence is SAL.

This sequence belongs to the TRAFAC class translation factor GTPase superfamily. Classic translation factor GTPase family. EF-Tu/EF-1A subfamily. In terms of assembly, monomer.

It is found in the cytoplasm. The catalysed reaction is GTP + H2O = GDP + phosphate + H(+). Its function is as follows. GTP hydrolase that promotes the GTP-dependent binding of aminoacyl-tRNA to the A-site of ribosomes during protein biosynthesis. This Lachnoclostridium phytofermentans (strain ATCC 700394 / DSM 18823 / ISDg) (Clostridium phytofermentans) protein is Elongation factor Tu.